We begin with the raw amino-acid sequence, 232 residues long: Charged multivesicular body protein 4c (232 aa).

Disordered regions lie at residues 1–23 (MSKL…PSAQ) and 177–232 (NKKM…AWAT). The tract at residues 1–153 (MSKLGKFFKG…EISEAFSQRV (153 aa)) is intramolecular interaction with C-terminus. Coiled-coil stretches lie at residues 21–45 (SAQE…YLEN) and 125–185 (LNKI…SLEL). The segment at 154 to 232 (QFADGFDEAE…DFKQLAAWAT (79 aa)) is intramolecular interaction with N-terminus. At Ser-210 the chain carries Phosphoserine; by AURKB.

This sequence belongs to the SNF7 family. In terms of assembly, probable core component of the endosomal sorting required for transport complex III (ESCRT-III). ESCRT-III components are thought to multimerize to form a flat lattice on the perimeter membrane of the endosome. Several assembly forms of ESCRT-III may exist that interact and act sequentially. Self-associates. Interacts with CHMP2A. Interacts with CHMP4A. Interacts with CHMP4B. Interacts with CHMP6. Interacts with VPS4A. Interacts with PDCD6IP; the interaction is direct. Phosphorylated at Ser-210 by AURKB during cytokinesis: together with ZFYVE19/ANCHR, phosphorylated CHMP4C retains abscission-competent VPS4 (VPS4A and/or VPS4B) at the midbody ring until abscission checkpoint signaling is terminated at late cytokinesis.

It localises to the cytoplasm. Its subcellular location is the cytosol. The protein localises to the late endosome membrane. The protein resides in the midbody. It is found in the midbody ring. Functionally, probable core component of the endosomal sorting required for transport complex III (ESCRT-III) which is involved in multivesicular bodies (MVBs) formation and sorting of endosomal cargo proteins into MVBs. MVBs contain intraluminal vesicles (ILVs) that are generated by invagination and scission from the limiting membrane of the endosome and mostly are delivered to lysosomes enabling degradation of membrane proteins, such as stimulated growth factor receptors, lysosomal enzymes and lipids. The MVB pathway appears to require the sequential function of ESCRT-O, -I,-II and -III complexes. ESCRT-III proteins mostly dissociate from the invaginating membrane before the ILV is released. The ESCRT machinery also functions in topologically equivalent membrane fission events, such as the terminal stages of cytokinesis. Key component of the cytokinesis checkpoint, a process required to delay abscission to prevent both premature resolution of intercellular chromosome bridges and accumulation of DNA damage: upon phosphorylation by AURKB, together with ZFYVE19/ANCHR, retains abscission-competent VPS4 (VPS4A and/or VPS4B) at the midbody ring until abscission checkpoint signaling is terminated at late cytokinesis. Deactivation of AURKB results in dephosphorylation of CHMP4C followed by its dissociation from ANCHR and VPS4 and subsequent abscission. ESCRT-III proteins are believed to mediate the necessary vesicle extrusion and/or membrane fission activities, possibly in conjunction with the AAA ATPase VPS4. CHMP4A/B/C are required for the exosomal release of SDCBP, CD63 and syndecan. This chain is Charged multivesicular body protein 4c (Chmp4c), found in Mus musculus (Mouse).